A 366-amino-acid polypeptide reads, in one-letter code: Chorismate synthase (366 aa).

Residues arginine 48 and arginine 54 each contribute to the NADP(+) site. FMN is bound by residues 125 to 127 (RSS), 238 to 239 (NA), glycine 278, 293 to 297 (KPTSS), and arginine 319.

It belongs to the chorismate synthase family. Homotetramer. It depends on FMNH2 as a cofactor.

It carries out the reaction 5-O-(1-carboxyvinyl)-3-phosphoshikimate = chorismate + phosphate. It participates in metabolic intermediate biosynthesis; chorismate biosynthesis; chorismate from D-erythrose 4-phosphate and phosphoenolpyruvate: step 7/7. In terms of biological role, catalyzes the anti-1,4-elimination of the C-3 phosphate and the C-6 proR hydrogen from 5-enolpyruvylshikimate-3-phosphate (EPSP) to yield chorismate, which is the branch point compound that serves as the starting substrate for the three terminal pathways of aromatic amino acid biosynthesis. This reaction introduces a second double bond into the aromatic ring system. The protein is Chorismate synthase of Neisseria gonorrhoeae (strain ATCC 700825 / FA 1090).